A 131-amino-acid chain; its full sequence is Small ribosomal subunit protein uS11 (131 aa).

Over residues 1-15 (MAAQKVKKTRRRKER) the composition is skewed to basic residues. Residues 1 to 23 (MAAQKVKKTRRRKERKNVEHGAA) form a disordered region.

It belongs to the universal ribosomal protein uS11 family. As to quaternary structure, part of the 30S ribosomal subunit. Interacts with proteins S7 and S18. Binds to IF-3.

Located on the platform of the 30S subunit, it bridges several disparate RNA helices of the 16S rRNA. Forms part of the Shine-Dalgarno cleft in the 70S ribosome. In Clostridium perfringens (strain 13 / Type A), this protein is Small ribosomal subunit protein uS11.